Here is a 1125-residue protein sequence, read N- to C-terminus: Probable inorganic carbon transporter subunit DabA (1125 aa).

Cys-578, Asp-580, His-769, and Cys-784 together coordinate Zn(2+). Positions 1106 to 1125 (SDPRPPALVEPKQTETHHAA) are disordered.

Belongs to the inorganic carbon transporter (TC 9.A.2) DabA family. As to quaternary structure, forms a complex with DabB. Requires Zn(2+) as cofactor.

The protein localises to the cell inner membrane. Its function is as follows. Part of an energy-coupled inorganic carbon pump. This is Probable inorganic carbon transporter subunit DabA from Nitrosococcus oceani (strain ATCC 19707 / BCRC 17464 / JCM 30415 / NCIMB 11848 / C-107).